A 1150-amino-acid polypeptide reads, in one-letter code: Apomucin (1150 aa).

2 stretches are compositionally biased toward low complexity: residues 1–36 and 46–79; these read ETARPSVAGSGTTGTVSGASGSTGSSSGSTGATGAS and SVAGSSGAPAVSSGASQAAGTSGAGPGTTASSVG. Repeat copies occupy residues 1 to 44, 45 to 125, 126 to 206, 207 to 287, and 288 to 368. The segment at 1–368 is 6 X 81 AA tandem repeats; it reads ETARPSVAGS…ASIGQPETSR (368 aa). Disordered regions lie at residues 1–730 and 776–925; these read ETAR…KTGI and APGS…PAPL. O-linked (GalNAc...) serine; partial glycosylation is found at Ser-46, Ser-50, Ser-51, Ser-57, Ser-58, and Ser-61. Thr-66 is a glycosylation site (O-linked (GalNAc...) threonine; partial). Residue Ser-67 is glycosylated (O-linked (GalNAc...) serine; partial). Thr-73 and Thr-74 each carry an O-linked (GalNAc...) threonine; partial glycan. Residues Ser-76 and Ser-77 are each glycosylated (O-linked (GalNAc...) serine; partial). Residues Thr-81 and Thr-83 are each glycosylated (O-linked (GalNAc...) threonine; partial). Positions 86–117 are enriched in low complexity; it reads PSVAGSGTTGTVSGASGSTGSSSGSPGATGAS. O-linked (GalNAc...) serine; partial glycosylation is found at Ser-87 and Ser-91. O-linked (GalNAc...) threonine; partial glycans are attached at residues Thr-93, Thr-94, and Thr-96. Residues Ser-98, Ser-101, and Ser-103 are each glycosylated (O-linked (GalNAc...) serine; partial). A glycan (O-linked (GalNAc...) threonine; partial) is linked at Thr-104. Residues Ser-106, Ser-107, Ser-108, and Ser-110 are each glycosylated (O-linked (GalNAc...) serine; partial). Thr-114 carries O-linked (GalNAc...) threonine; partial glycosylation. Ser-117 is a glycosylation site (O-linked (GalNAc...) serine; partial). A glycan (O-linked (GalNAc...) threonine; partial) is linked at Thr-123. A glycan (O-linked (GalNAc...) serine; partial) is linked at Ser-124. Composition is skewed to low complexity over residues 127 to 160, 167 to 198, 208 to 241, 248 to 279, 289 to 322, 329 to 360, and 370 to 396; these read SVAGSSGAPAVSSGASQAAGTSGAGPGTTASSVG, PSVAGSGTTGTVSGASGSTGSSSGSPGATGAS, and SVAGSSGAPAVSSGASQAAGTSEATTS. The 6; truncated repeat unit spans residues 369 to 391; the sequence is ISVAGSSGAPAVSSGASQAAGTS. The N-linked (GlcNAc...) asparagine glycan is linked to Asn-418. A compositionally biased stretch (polar residues) spans 442-459; sequence SYNTEATTSIGRSGTTHT. Residues 473 to 506 show a composition bias toward low complexity; sequence SHSSQSSKPGSSVTTPGSPESGSETGTSGEFSTT. Composition is skewed to polar residues over residues 507-517 and 537-547; these read VISGSSHTEAT and ELSGTTIASGN. The N-linked (GlcNAc...) asparagine glycan is linked to Asn-547. Residues 548–558 show a composition bias toward low complexity; that stretch reads ATTEATTSTET. The segment covering 564–586 has biased composition (polar residues); the sequence is TGAQTTVPGSQVSGSETGTSEAV. Residues 590-625 are compositionally biased toward low complexity; it reads AIASGSSSTGTTSGASDSQVTGSRTGTTGVVLGTTV. Composition is skewed to polar residues over residues 626 to 635 and 643 to 661; these read APGSSSTGAT and GTRSTSLGTTRVASGTTYE. Residues 671–682 are compositionally biased toward gly residues; that stretch reads GGSGTPGSGINT. Composition is skewed to polar residues over residues 688-697, 706-729, and 779-788; these read QVTGIQTGTT, LPGSSNTGATTSPSERTSPGSKTG, and SFNTKATTPT. Positions 790 to 833 are enriched in low complexity; sequence VRAATGAGTAVGATSRSTGISTGPENSTPGTTETGSGTTSSPGG. Over residues 875–908 the composition is skewed to polar residues; it reads ETTTAPRISATGSTSVSKEITASPKVSSPETTAG. N-linked (GlcNAc...) asparagine glycosylation is found at Asn-917, Asn-985, Asn-1002, and Asn-1068. The region spanning 929–995 is the VWFC domain; it reads PVCHGPLGEE…DTCCEIGHCE (67 aa). 4 disulfide bridges follow: Cys-1062–Cys-1109, Cys-1076–Cys-1123, Cys-1085–Cys-1139, and Cys-1089–Cys-1141. The 85-residue stretch at 1062–1146 folds into the CTCK domain; it reads CKPSPVNVTV…TACSCLDPCQ (85 aa).

In terms of assembly, intermolecular disulfide bonds could help maintain a multimeric mucin structure. Post-translationally, extensively O-glycosylated on most but not all Ser and Thr residues of the repeat units. Highest glycosylation appears to occur on Ser residues which have Gly at positions at +2 or -2 from the glycosylation site or, where Gly is the penultimate residue. The presence of proline (usually at position +3 or -3) appears to also enhance glycosylation. In terms of tissue distribution, submaxillary mucosae.

Its subcellular location is the secreted. In terms of biological role, apomucin is part of mucin, the major glycoprotein synthesized and secreted by mucous cells of the submaxillary gland. Its highly viscous aqueous solutions serve to lubricate the oral cavity and to protect it from the external environment. The polypeptide is Apomucin (Sus scrofa (Pig)).